We begin with the raw amino-acid sequence, 222 residues long: Probable fructose-6-phosphate aldolase (222 aa).

Lysine 87 functions as the Schiff-base intermediate with substrate in the catalytic mechanism.

Belongs to the transaldolase family. Type 3A subfamily.

It localises to the cytoplasm. The enzyme catalyses beta-D-fructose 6-phosphate = dihydroxyacetone + D-glyceraldehyde 3-phosphate. Catalyzes the reversible formation of fructose 6-phosphate from dihydroxyacetone and D-glyceraldehyde 3-phosphate via an aldolization reaction. The protein is Probable fructose-6-phosphate aldolase of Streptococcus pneumoniae (strain ATCC 700669 / Spain 23F-1).